We begin with the raw amino-acid sequence, 313 residues long: Glutathionyl-hydroquinone reductase PcpF (313 aa).

Residue cysteine 53 is the Nucleophile of the active site. Glutathione is bound by residues tryptophan 86, 119–122 (RVTI), and 137–138 (ES). The GST C-terminal domain maps to 161–285 (PAEFRPEIDR…INLRHAKAHY (125 aa)). Tyrosine 184 serves as the catalytic Proton donor/acceptor.

The protein belongs to the GST superfamily. Xi-class GSH transferase family. Homodimer.

The enzyme catalyses 2-(glutathione-S-yl)-hydroquinone + glutathione = hydroquinone + glutathione disulfide. Functionally, catalyzes glutathione (GSH)-dependent reduction of glutathionyl-hydroquinones (GS-HQs) to the corresponding hydroquinones. Can act on halogenated substrates such as GS-2,6-dichloro-p-hydroquinone (GS-DiCH) and GS-trichloro-p-hydroquinone (GS-TriCH). Involved in the degradation of pentachlorophenol (PCP), a toxic pollutant. This chain is Glutathionyl-hydroquinone reductase PcpF, found in Sphingobium chlorophenolicum.